A 255-amino-acid chain; its full sequence is Cell division protein ZapD (255 aa).

The protein belongs to the ZapD family. As to quaternary structure, interacts with FtsZ.

The protein localises to the cytoplasm. In terms of biological role, cell division factor that enhances FtsZ-ring assembly. Directly interacts with FtsZ and promotes bundling of FtsZ protofilaments, with a reduction in FtsZ GTPase activity. The polypeptide is Cell division protein ZapD (Methylococcus capsulatus (strain ATCC 33009 / NCIMB 11132 / Bath)).